The following is a 414-amino-acid chain: Probable elongation factor 1-gamma 1 (414 aa).

The region spanning 1–82 (MALVLHTYKG…YVSRLNGDNS (82 aa)) is the GST N-terminal domain. The 129-residue stretch at 87-215 (SLIEYAQIEQ…VKQTEAVPPI (129 aa)) folds into the GST C-terminal domain. Residues 214–224 (PIASKKAAQPA) are compositionally biased toward low complexity. The interval 214–260 (PIASKKAAQPAKPKEEPKKKEAPVAEAPKLAEEEEAPKPKAKNPLDL) is disordered. Residues 225-236 (KPKEEPKKKEAP) are compositionally biased toward basic and acidic residues. Residues 254 to 414 (AKNPLDLLPP…EALLDAKCFK (161 aa)) form the EF-1-gamma C-terminal domain.

In terms of assembly, EF-1 is composed of four subunits: alpha, beta, delta, and gamma.

Probably plays a role in anchoring the complex to other cellular components. In Arabidopsis thaliana (Mouse-ear cress), this protein is Probable elongation factor 1-gamma 1.